A 1222-amino-acid chain; its full sequence is ATP-dependent helicase/nuclease subunit A (1222 aa).

The 457-residue stretch at 39 to 495 (QKRTAQQIEA…ILLKENFRSQ (457 aa)) folds into the UvrD-like helicase ATP-binding domain. An ATP-binding site is contributed by 60–67 (ASAGSGKT). Residues 524-810 (QLIAGSHAQT…NLMTIHKSKG (287 aa)) form the UvrD-like helicase C-terminal domain.

Belongs to the helicase family. AddA subfamily. As to quaternary structure, heterodimer of AddA and AddB/RexB. The cofactor is Mg(2+).

It carries out the reaction Couples ATP hydrolysis with the unwinding of duplex DNA by translocating in the 3'-5' direction.. The enzyme catalyses ATP + H2O = ADP + phosphate + H(+). Its function is as follows. The heterodimer acts as both an ATP-dependent DNA helicase and an ATP-dependent, dual-direction single-stranded exonuclease. Recognizes the chi site generating a DNA molecule suitable for the initiation of homologous recombination. The AddA nuclease domain is required for chi fragment generation; this subunit has the helicase and 3' -&gt; 5' nuclease activities. In Streptococcus pyogenes serotype M6 (strain ATCC BAA-946 / MGAS10394), this protein is ATP-dependent helicase/nuclease subunit A.